We begin with the raw amino-acid sequence, 229 residues long: LexA repressor (229 aa).

A DNA-binding region (H-T-H motif) is located at residues 26–46 (FDEMKEALDLASKSGIHRLIT). Catalysis depends on for autocatalytic cleavage activity residues serine 149 and lysine 187.

It belongs to the peptidase S24 family. In terms of assembly, homodimer.

The enzyme catalyses Hydrolysis of Ala-|-Gly bond in repressor LexA.. Represses a number of genes involved in the response to DNA damage (SOS response), including recA and lexA. In the presence of single-stranded DNA, RecA interacts with LexA causing an autocatalytic cleavage which disrupts the DNA-binding part of LexA, leading to derepression of the SOS regulon and eventually DNA repair. This chain is LexA repressor, found in Phenylobacterium zucineum (strain HLK1).